The following is a 54-amino-acid chain: STLSSNDAKVVDGKATPLGSFPHVKRAGDFLYVSGTSSRRPDNTIAGAELDSTS.

In terms of assembly, homohexamer.

The enzyme catalyses (2Z,4E)-2-aminomuconate + H2O = (3E)-2-oxohex-3-enedioate + NH4(+). It participates in xenobiotic degradation; nitrobenzene degradation. Its function is as follows. Converts 2-aminomuconate to 4-oxalocrotonate, an intermediate step in the biodegradation of nitrobenzene. This chain is 2-aminomuconate deaminase, found in Ectopseudomonas oleovorans (Pseudomonas oleovorans).